Consider the following 416-residue polypeptide: Exodeoxyribonuclease 7 large subunit (416 aa).

The interval 1-21 (MTEPDSKPKKGRAGRKKAEPV) is disordered.

It belongs to the XseA family. As to quaternary structure, heterooligomer composed of large and small subunits.

Its subcellular location is the cytoplasm. The catalysed reaction is Exonucleolytic cleavage in either 5'- to 3'- or 3'- to 5'-direction to yield nucleoside 5'-phosphates.. Bidirectionally degrades single-stranded DNA into large acid-insoluble oligonucleotides, which are then degraded further into small acid-soluble oligonucleotides. This chain is Exodeoxyribonuclease 7 large subunit, found in Deinococcus radiodurans (strain ATCC 13939 / DSM 20539 / JCM 16871 / CCUG 27074 / LMG 4051 / NBRC 15346 / NCIMB 9279 / VKM B-1422 / R1).